The sequence spans 153 residues: MGFRGAWNKRNRLIEDLDTFLKLYKKAQKAYKKVRKVEFSNNDELIENAKKRYQEIWDEFRAFVNKKAWVDPKLWATIRKMNQTGDRKVVKTYSRDSQVISDFVNHTIAVHNGKTFVPIYITPEMVGHKLGEFAPTRTFRSHPEKSAKVVKKK.

The tract at residues 1 to 63 (MGFRGAWNKR…QEIWDEFRAF (63 aa)) is unknown. Residues 64–153 (VNKKAWVDPK…EKSAKVVKKK (90 aa)) form a small ribosomal subunit protein uS19 region.

It belongs to the universal ribosomal protein uS19 family.

In terms of biological role, protein S19 forms a complex with S13 that binds strongly to the 16S ribosomal RNA. The protein is Small ribosomal subunit protein uS19 of Hydrogenobaculum sp. (strain Y04AAS1).